Consider the following 295-residue polypeptide: UDP-3-O-acyl-N-acetylglucosamine deacetylase (295 aa).

The Zn(2+) site is built by histidine 77, histidine 233, and aspartate 237. Residue histidine 260 is the Proton donor of the active site.

The protein belongs to the LpxC family. Requires Zn(2+) as cofactor.

It carries out the reaction a UDP-3-O-[(3R)-3-hydroxyacyl]-N-acetyl-alpha-D-glucosamine + H2O = a UDP-3-O-[(3R)-3-hydroxyacyl]-alpha-D-glucosamine + acetate. The protein operates within glycolipid biosynthesis; lipid IV(A) biosynthesis; lipid IV(A) from (3R)-3-hydroxytetradecanoyl-[acyl-carrier-protein] and UDP-N-acetyl-alpha-D-glucosamine: step 2/6. In terms of biological role, catalyzes the hydrolysis of UDP-3-O-myristoyl-N-acetylglucosamine to form UDP-3-O-myristoylglucosamine and acetate, the committed step in lipid A biosynthesis. This Solibacter usitatus (strain Ellin6076) protein is UDP-3-O-acyl-N-acetylglucosamine deacetylase.